The chain runs to 135 residues: Small ribosomal subunit protein uS9 (135 aa).

Positions 96 to 135 are disordered; that stretch reads SADNRKPLKTEGHLSRDPRAKERRKYGLKKARKAPQFSKR. Residues 97 to 115 show a composition bias toward basic and acidic residues; the sequence is ADNRKPLKTEGHLSRDPRA. Positions 116–135 are enriched in basic residues; that stretch reads KERRKYGLKKARKAPQFSKR.

This sequence belongs to the universal ribosomal protein uS9 family.

In Prochlorococcus marinus (strain MIT 9303), this protein is Small ribosomal subunit protein uS9.